The sequence spans 640 residues: 2-hydroxyacyl-CoA lyase 2 (640 aa).

The chain crosses the membrane as a helical span at residues 2 to 22; it reads VLFLIIAAIIIGLLLWKWLDV. Glu-102 contacts thiamine diphosphate. Residues 477 to 557 form a thiamine pyrophosphate binding region; the sequence is DFVGSAAYIV…VIGIVGNDAC (81 aa). Residues Asp-528 and Asn-554 each coordinate Mg(2+).

The protein belongs to the TPP enzyme family. The cofactor is Mg(2+). Thiamine diphosphate is required as a cofactor.

Its subcellular location is the endoplasmic reticulum membrane. The enzyme catalyses 2-hydroxyoctadecanoyl-CoA = heptadecanal + formyl-CoA. The catalysed reaction is (2R)-hydroxyhexadecanoyl-CoA = pentadecanal + formyl-CoA. Endoplasmic reticulum 2-OH acyl-CoA lyase involved in the cleavage (C1 removal) reaction in the fatty acid alpha-oxydation in a thiamine pyrophosphate (TPP)-dependent manner. The protein is 2-hydroxyacyl-CoA lyase 2 of Caenorhabditis elegans.